Reading from the N-terminus, the 150-residue chain is Histone H2B.2 (150 aa).

2 stretches are compositionally biased toward basic and acidic residues: residues 1–21 (MAPK…KAGE) and 33–49 (EKRL…EGKK). The interval 1–58 (MAPKAEKKPAEKKPAEEKAGEKAPAAGKKPKAEKRLPASKGEKGGEGKKERGRKKAKK) is disordered. An N6-acetyllysine mark is found at lysine 7 and lysine 34. Lysine 146 participates in a covalent cross-link: Glycyl lysine isopeptide (Lys-Gly) (interchain with G-Cter in ubiquitin).

It belongs to the histone H2B family. The nucleosome is a histone octamer containing two molecules each of H2A, H2B, H3 and H4 assembled in one H3-H4 heterotetramer and two H2A-H2B heterodimers. The octamer wraps approximately 147 bp of DNA. Can be acetylated to form H2BK6ac and H2BK33ac. In terms of processing, monoubiquitinated by BRE1 to form H2BK143ub1 and deubiquitinated by UBP26. Required for heterochromatic histone H3 di- and trimethylation at H3K4me. May give a specific tag for epigenetic transcriptional activation.

The protein localises to the nucleus. Its subcellular location is the chromosome. Its function is as follows. Core component of nucleosome. Nucleosomes wrap and compact DNA into chromatin, limiting DNA accessibility to the cellular machineries which require DNA as a template. Histones thereby play a central role in transcription regulation, DNA repair, DNA replication and chromosomal stability. DNA accessibility is regulated via a complex set of post-translational modifications of histones, also called histone code, and nucleosome remodeling. The protein is Histone H2B.2 (H2B.2) of Oryza sativa subsp. indica (Rice).